A 216-amino-acid polypeptide reads, in one-letter code: MIF4G domain-containing protein A (216 aa).

One can recognise an MIF4G domain in the interval 2–199; it reads DSAWTALDME…LEILEFRASG (198 aa).

The protein belongs to the MIF4GD family. Interacts with eif4g1, eif4g2 and slbp; probably tethered by SLBP to the 3'-end of mRNAs ending with the histone stem-loop, it also interacts with eif4g1 which is bound to their 5'-end.

Its subcellular location is the cytoplasm. The protein resides in the nucleus. Its function is as follows. Functions in replication-dependent translation of histone mRNAs which differ from other eukaryotic mRNAs in that they do not end with a poly-A tail but a stem-loop. May participate in circularizing those mRNAs specifically enhancing their translation. The sequence is that of MIF4G domain-containing protein A (mif4gda) from Danio rerio (Zebrafish).